A 127-amino-acid polypeptide reads, in one-letter code: Large ribosomal subunit protein bL17 (127 aa).

It belongs to the bacterial ribosomal protein bL17 family. As to quaternary structure, part of the 50S ribosomal subunit. Contacts protein L32.

The protein is Large ribosomal subunit protein bL17 of Photobacterium profundum (strain SS9).